We begin with the raw amino-acid sequence, 393 residues long: MANIDNKEQTELDQQDMEDVEDVEEEETGEEANSKARQLTAQMMQNPQVLAALQERLDDLVGTPTGYIESLPKVVKRRVNALKNLQVKCAQIEAKFYEEVHELERKYAALYQPFFEKRSDIINASYEPTEEECEWKVDEEEDIAEDLKEKAKLEEEKKDEEKEDPKGIPEFWLTVFKNVDLLSDMVQEHDEPILKHLKDIKVKFSEAGQPMNFMLEFHFEPNEFFTNELLTKTYKMRSEPDESDPFSFDGPEIMGCTGCLIDWKKGKNVTLKTIKKKQKHKGRGTVRTVTKTVPNDSFFNFFSPPEVPENGELDDDAEAILTADFEIGHFLRERIIPRSVLYFTGEAIEDDDDDYDEEGEEADDEEGEEEADEDHDPDFDPKKAQNPAECKQQ.

Residues 1 to 10 (MANIDNKEQT) show a composition bias toward basic and acidic residues. The disordered stretch occupies residues 1–38 (MANIDNKEQTELDQQDMEDVEDVEEEETGEEANSKARQ). Over residues 11–30 (ELDQQDMEDVEDVEEEETGE) the composition is skewed to acidic residues. Residues 126-151 (YEPTEEECEWKVDEEEDIAEDLKEKA) carry the NAP1L motif motif. The short motif at 274–280 (IKKKQKH) is the Nuclear localization signal element. Positions 347-377 (AIEDDDDDYDEEGEEADDEEGEEEADEDHDP) are enriched in acidic residues. A disordered region spans residues 347–393 (AIEDDDDDYDEEGEEADDEEGEEEADEDHDPDFDPKKAQNPAECKQQ).

This sequence belongs to the nucleosome assembly protein (NAP) family. Forms homomultimers. Interacts with histone b4. Interacts with the B-type cyclins ccnb1 and ccnb2. Phosphorylated by cyclin B-cdc2 kinase complexes.

The protein resides in the cytoplasm. Its subcellular location is the nucleus. Functionally, acts as a chaperone for the linker histone to facilitate deposition of histone B4 onto linker DNA. Required for both remodeling of sperm chromatin into nucleosomes, and linker histone binding to nucleosome core dimers. Plays a role in tissue-specific gene regulation. Required for primitive hemopoiesis, acting upstream of tal1/scl. The protein is Nucleosome assembly protein 1-like 1-B (nap1l1-b) of Xenopus laevis (African clawed frog).